The primary structure comprises 101 residues: Small ribosomal subunit protein uS14 (101 aa).

This sequence belongs to the universal ribosomal protein uS14 family. In terms of assembly, part of the 30S ribosomal subunit. Contacts proteins S3 and S10.

Functionally, binds 16S rRNA, required for the assembly of 30S particles and may also be responsible for determining the conformation of the 16S rRNA at the A site. The chain is Small ribosomal subunit protein uS14 from Kocuria rhizophila (strain ATCC 9341 / DSM 348 / NBRC 103217 / DC2201).